Reading from the N-terminus, the 662-residue chain is Junctophilin-1 (662 aa).

At 1–640 the chain is on the cytoplasmic side; that stretch reads MTGGRFDFDD…EREANSGPNS (640 aa). 5 MORN repeats span residues 14–36, 38–59, 60–82, 106–128, and 129–151; these read YCGG…KGQG, YSGS…SGNT, YQGY…KWMY, YEGT…DGGT, and YQGQ…PYGM. Ser-157, Ser-216, and Ser-220 each carry phosphoserine. Residues 228–247 are disordered; the sequence is SKSSISSKRSSVRSDAAMSR. MORN repeat units lie at residues 281-303 and 304-326; these read YMGE…NGMK and YEGE…DGSK. A compositionally biased stretch (basic and acidic residues) spans 432 to 443; sequence VDAKENPEEKVP. The segment at 432–634 is disordered; that stretch reads VDAKENPEEK…DSCPSMEREA (203 aa). Thr-448 carries the phosphothreonine modification. Position 452 is a phosphoserine (Ser-452). Position 461 is a phosphothreonine (Thr-461). Phosphoserine is present on residues Ser-465, Ser-469, and Ser-475. Low complexity predominate over residues 584 to 599; sequence KPSPNKWSPPKSVTKP. Positions 600–614 are enriched in basic and acidic residues; it reads VAKESKAEPKAKKSE. The helical; Anchor for type IV membrane protein transmembrane segment at 641–661 threads the bilayer; that stretch reads VMIVLVMLLNIGLAILFVHFL.

Belongs to the junctophilin family.

Its subcellular location is the cell membrane. It is found in the endoplasmic reticulum membrane. The protein localises to the sarcoplasmic reticulum membrane. Its function is as follows. Junctophilins contribute to the formation of junctional membrane complexes (JMCs) which link the plasma membrane with the endoplasmic or sarcoplasmic reticulum in excitable cells. Provides a structural foundation for functional cross-talk between the cell surface and intracellular calcium release channels. JPH1 contributes to the construction of the skeletal muscle triad by linking the t-tubule (transverse-tubule) and SR (sarcoplasmic reticulum) membranes. The protein is Junctophilin-1 (JPH1) of Oryctolagus cuniculus (Rabbit).